A 257-amino-acid chain; its full sequence is uncharacterized protein (257 aa).

Residues 7 to 27 (IGILEIVVILSILITSVSLAY) form a helical membrane-spanning segment.

It localises to the membrane. This is an uncharacterized protein from Methanocaldococcus jannaschii (strain ATCC 43067 / DSM 2661 / JAL-1 / JCM 10045 / NBRC 100440) (Methanococcus jannaschii).